Reading from the N-terminus, the 201-residue chain is ADP-ribosylation factor-like protein 4D (201 aa).

Gly2 is lipidated: N-myristoyl glycine. GTP-binding positions include 28-35 (GLDSAGKT), 76-80 (DVGGQ), and 135-138 (NKQD).

The protein belongs to the small GTPase superfamily. Arf family. As to quaternary structure, interacts with CYTH2; the interaction is direct and ARL4D GTP-dependent. Does not interact with ARL4D.

It localises to the nucleus. It is found in the nucleolus. Its subcellular location is the cell membrane. The protein resides in the cytoplasm. Functionally, small GTP-binding protein which cycles between an inactive GDP-bound and an active GTP-bound form, and the rate of cycling is regulated by guanine nucleotide exchange factors (GEF) and GTPase-activating proteins (GAP). GTP-binding protein that does not act as an allosteric activator of the cholera toxin catalytic subunit. Recruits CYTH1, CYTH2, CYTH3 and CYTH4 to the plasma membrane in GDP-bound form. The protein is ADP-ribosylation factor-like protein 4D (ARL4D) of Homo sapiens (Human).